Consider the following 223-residue polypeptide: Chalcone--flavanone isomerase 2 (223 aa).

Substrate contacts are provided by Thr41, Asn106, and Ser183.

This sequence belongs to the chalcone isomerase family.

The catalysed reaction is a chalcone = a flavanone.. The protein operates within secondary metabolite biosynthesis; flavonoid biosynthesis. Functionally, catalyzes the intramolecular cyclization of bicyclic chalcones into tricyclic (S)-flavanones. Responsible for the isomerization of 4,2',4',6'-tetrahydroxychalcone (also termed chalcone) into naringenin. The polypeptide is Chalcone--flavanone isomerase 2 (CHI2) (Arabidopsis thaliana (Mouse-ear cress)).